Reading from the N-terminus, the 128-residue chain is Glycine cleavage system H protein (128 aa).

Residues 22 to 104 (TVLVGITDYA…YGEGWIFRLK (83 aa)) form the Lipoyl-binding domain. The residue at position 63 (K63) is an N6-lipoyllysine.

Belongs to the GcvH family. In terms of assembly, the glycine cleavage system is composed of four proteins: P, T, L and H. (R)-lipoate serves as cofactor.

In terms of biological role, the glycine cleavage system catalyzes the degradation of glycine. The H protein shuttles the methylamine group of glycine from the P protein to the T protein. This Thermus thermophilus (strain ATCC BAA-163 / DSM 7039 / HB27) protein is Glycine cleavage system H protein.